A 382-amino-acid polypeptide reads, in one-letter code: p21-activated protein kinase-interacting protein 1 (382 aa).

5 WD repeats span residues 37 to 77 (THHS…EHGA), 80 to 120 (HHAG…KTFK), 122 to 160 (HRGH…SAFI), 202 to 240 (TNGK…CLCE), and 243 to 284 (AHEN…KVPP). The interval 313–382 (LPPAAEPCPD…MSEKKRKKKM (70 aa)) is disordered. Residues 352–363 (DSKQPTKGNSPV) show a composition bias toward polar residues. Residues 365–382 (AKKRKMATMSEKKRKKKM) show a composition bias toward basic residues.

In terms of assembly, interacts with PAK1.

The protein localises to the nucleus. The protein resides in the nucleolus. Negatively regulates the PAK1 kinase. PAK1 is a member of the PAK kinase family, which has been shown to play a positive role in the regulation of signaling pathways involving MAPK8 and RELA. PAK1 exists as an inactive homodimer, which is activated by binding of small GTPases such as CDC42 to an N-terminal regulatory domain. PAK1IP1 also binds to the N-terminus of PAK1, and inhibits the specific activation of PAK1 by CDC42. May be involved in ribosomal large subunit assembly. This chain is p21-activated protein kinase-interacting protein 1 (Pak1ip1), found in Mus musculus (Mouse).